Here is a 371-residue protein sequence, read N- to C-terminus: Antibiotic efflux pump periplasmic linker protein ArpA (371 aa).

Residues 1 to 22 (MQFKPAVTALVSAVALATLLSG) form the signal peptide. C23 carries N-palmitoyl cysteine lipidation. The S-diacylglycerol cysteine moiety is linked to residue C23. Residues 115–155 (LAERYKQLIDEQAVSKQEYDDANAKRLQAEASLKSAQIDLR) are a coiled coil.

This sequence belongs to the membrane fusion protein (MFP) (TC 8.A.1) family.

Its subcellular location is the cell inner membrane. Functionally, the periplasmic linker protein component of an antibiotic efflux pump. Confers resistance to numerous structurally unrelated antibiotics such as carbenicillin, chloramphenicol, erythromycin, novobiocin, streptomycin and tetracycline. Is not involved in organic solvent efflux. In Pseudomonas putida (Arthrobacter siderocapsulatus), this protein is Antibiotic efflux pump periplasmic linker protein ArpA (arpA).